We begin with the raw amino-acid sequence, 628 residues long: Cystathionine gamma-synthase-like enzyme iboG2 (628 aa).

Tyr-313 contributes to the substrate binding site. Lys-417 carries the N6-(pyridoxal phosphate)lysine modification.

The protein belongs to the trans-sulfuration enzymes family. Requires pyridoxal 5'-phosphate as cofactor.

It participates in secondary metabolite biosynthesis. Its function is as follows. Cystathionine gamma-synthase-like enzyme; part of the gene cluster that mediates the biosynthesis of the psychoactive metabolites ibotenic acid and muscimol. The first committed step is glutamate hydroxylation by the 2-oxoglutarate-dependent dioxygenase iboH, and the last step is decarboxylation of ibotenic acid to muscimol by the decarboxylase iboD. The order of the intermediate reactions is somewhat ambiguous. IboA likely activates the carboxylic acid at position 5 to introduce an amide bond, and the flavin monooxygenase iboF generates the N-O bond. There are several options for the latter step. One option is that iboF directly hydroxylates the amide nitrogen formed by iboA to produce a hydroxamic acid species. Another option is that iboF hydroxylates an external N-containing compound, whose resulting N-O bond is subsequently introduced into the hydroxyglutamate scaffold. The paralogous PLP-dependent cystathionine gamma-synthase-like enzymes iboG1 and iboG2 are likely involved in substitution of the OH group at position 3 by the O-N moiety. The first cyclic intermediate is most probably tricholomic acid which is likely desaturated to ibotenic acid by the cytochrome P450 monooxygenase iboC. This is Cystathionine gamma-synthase-like enzyme iboG2 from Amanita muscaria (strain Koide BX008).